The primary structure comprises 89 residues: Small ribosomal subunit protein uS15 (89 aa).

A compositionally biased stretch (basic and acidic residues) spans 1 to 21 (MAITQERKNQLISEFKTHESD). Positions 1 to 23 (MAITQERKNQLISEFKTHESDTG) are disordered.

This sequence belongs to the universal ribosomal protein uS15 family. In terms of assembly, part of the 30S ribosomal subunit. Forms a bridge to the 50S subunit in the 70S ribosome, contacting the 23S rRNA.

Functionally, one of the primary rRNA binding proteins, it binds directly to 16S rRNA where it helps nucleate assembly of the platform of the 30S subunit by binding and bridging several RNA helices of the 16S rRNA. Its function is as follows. Forms an intersubunit bridge (bridge B4) with the 23S rRNA of the 50S subunit in the ribosome. The polypeptide is Small ribosomal subunit protein uS15 (Bacillus velezensis (strain DSM 23117 / BGSC 10A6 / LMG 26770 / FZB42) (Bacillus amyloliquefaciens subsp. plantarum)).